The primary structure comprises 403 residues: Phosphopentomutase (403 aa).

Mn(2+) is bound by residues Asp-13, Asp-298, His-303, Asp-339, His-340, and His-351.

Belongs to the phosphopentomutase family. The cofactor is Mn(2+).

The protein localises to the cytoplasm. The enzyme catalyses 2-deoxy-alpha-D-ribose 1-phosphate = 2-deoxy-D-ribose 5-phosphate. The catalysed reaction is alpha-D-ribose 1-phosphate = D-ribose 5-phosphate. It functions in the pathway carbohydrate degradation; 2-deoxy-D-ribose 1-phosphate degradation; D-glyceraldehyde 3-phosphate and acetaldehyde from 2-deoxy-alpha-D-ribose 1-phosphate: step 1/2. In terms of biological role, isomerase that catalyzes the conversion of deoxy-ribose 1-phosphate (dRib-1-P) and ribose 1-phosphate (Rib-1-P) to deoxy-ribose 5-phosphate (dRib-5-P) and ribose 5-phosphate (Rib-5-P), respectively. The protein is Phosphopentomutase of Streptococcus equi subsp. zooepidemicus (strain MGCS10565).